Reading from the N-terminus, the 235-residue chain is Aspartate/glutamate leucyltransferase (235 aa).

It belongs to the R-transferase family. Bpt subfamily.

The protein resides in the cytoplasm. It carries out the reaction N-terminal L-glutamyl-[protein] + L-leucyl-tRNA(Leu) = N-terminal L-leucyl-L-glutamyl-[protein] + tRNA(Leu) + H(+). It catalyses the reaction N-terminal L-aspartyl-[protein] + L-leucyl-tRNA(Leu) = N-terminal L-leucyl-L-aspartyl-[protein] + tRNA(Leu) + H(+). Functionally, functions in the N-end rule pathway of protein degradation where it conjugates Leu from its aminoacyl-tRNA to the N-termini of proteins containing an N-terminal aspartate or glutamate. The protein is Aspartate/glutamate leucyltransferase of Pseudomonas savastanoi pv. phaseolicola (strain 1448A / Race 6) (Pseudomonas syringae pv. phaseolicola (strain 1448A / Race 6)).